A 184-amino-acid chain; its full sequence is Protein GrpE (184 aa).

The interval 1 to 24 is disordered; it reads MADEQLDEKNLNSEEAGAVNGDAR.

It belongs to the GrpE family. In terms of assembly, homodimer.

The protein localises to the cytoplasm. Functionally, participates actively in the response to hyperosmotic and heat shock by preventing the aggregation of stress-denatured proteins, in association with DnaK and GrpE. It is the nucleotide exchange factor for DnaK and may function as a thermosensor. Unfolded proteins bind initially to DnaJ; upon interaction with the DnaJ-bound protein, DnaK hydrolyzes its bound ATP, resulting in the formation of a stable complex. GrpE releases ADP from DnaK; ATP binding to DnaK triggers the release of the substrate protein, thus completing the reaction cycle. Several rounds of ATP-dependent interactions between DnaJ, DnaK and GrpE are required for fully efficient folding. This is Protein GrpE from Pseudomonas entomophila (strain L48).